The primary structure comprises 185 residues: Ribosome-recycling factor (185 aa).

The protein belongs to the RRF family.

Its subcellular location is the cytoplasm. Functionally, responsible for the release of ribosomes from messenger RNA at the termination of protein biosynthesis. May increase the efficiency of translation by recycling ribosomes from one round of translation to another. This is Ribosome-recycling factor from Desulfatibacillum aliphaticivorans.